The primary structure comprises 141 residues: Putative pre-16S rRNA nuclease (141 aa).

It belongs to the YqgF nuclease family.

The protein resides in the cytoplasm. Functionally, could be a nuclease involved in processing of the 5'-end of pre-16S rRNA. The chain is Putative pre-16S rRNA nuclease from Syntrophomonas wolfei subsp. wolfei (strain DSM 2245B / Goettingen).